A 154-amino-acid polypeptide reads, in one-letter code: Endoribonuclease YbeY (154 aa).

Zn(2+)-binding residues include His113, His117, and His123.

The protein belongs to the endoribonuclease YbeY family. Requires Zn(2+) as cofactor.

Its subcellular location is the cytoplasm. Functionally, single strand-specific metallo-endoribonuclease involved in late-stage 70S ribosome quality control and in maturation of the 3' terminus of the 16S rRNA. This chain is Endoribonuclease YbeY, found in Vibrio cholerae serotype O1 (strain ATCC 39541 / Classical Ogawa 395 / O395).